The sequence spans 289 residues: Digeranylgeranylglyceryl phosphate synthase (289 aa).

The next 8 helical transmembrane spans lie at 17–37 (CLMA…ILTS), 50–70 (LFSS…GNAI), 106–126 (FALG…IALF), 141–161 (TPLL…LFGA), 163–183 (VFGL…ALAI), 221–241 (LIGF…MLGL), 243–263 (YLYL…QLLA), and 269–289 (KSSK…IAGV).

Belongs to the UbiA prenyltransferase family. DGGGP synthase subfamily. The cofactor is Mg(2+).

The protein localises to the cell membrane. It catalyses the reaction sn-3-O-(geranylgeranyl)glycerol 1-phosphate + (2E,6E,10E)-geranylgeranyl diphosphate = 2,3-bis-O-(geranylgeranyl)-sn-glycerol 1-phosphate + diphosphate. The protein operates within membrane lipid metabolism; glycerophospholipid metabolism. Its function is as follows. Prenyltransferase that catalyzes the transfer of the geranylgeranyl moiety of geranylgeranyl diphosphate (GGPP) to the C2 hydroxyl of (S)-3-O-geranylgeranylglyceryl phosphate (GGGP). This reaction is the second ether-bond-formation step in the biosynthesis of archaeal membrane lipids. This Methanosarcina barkeri (strain Fusaro / DSM 804) protein is Digeranylgeranylglyceryl phosphate synthase.